A 479-amino-acid chain; its full sequence is Adenosylhomocysteinase (479 aa).

Substrate contacts are provided by Thr-65, Asp-145, and Glu-205. Position 206 to 208 (206 to 208 (TTT)) interacts with NAD(+). Lys-235 and Asp-239 together coordinate substrate. Residues Asn-240, 269–274 (GYGDVG), Glu-292, Asn-327, 348–350 (IGH), and Asn-393 contribute to the NAD(+) site.

It belongs to the adenosylhomocysteinase family. Requires NAD(+) as cofactor.

It is found in the cytoplasm. It catalyses the reaction S-adenosyl-L-homocysteine + H2O = L-homocysteine + adenosine. Its pathway is amino-acid biosynthesis; L-homocysteine biosynthesis; L-homocysteine from S-adenosyl-L-homocysteine: step 1/1. Its function is as follows. May play a key role in the regulation of the intracellular concentration of adenosylhomocysteine. The sequence is that of Adenosylhomocysteinase from Herminiimonas arsenicoxydans.